We begin with the raw amino-acid sequence, 754 residues long: Bifunctional sesterterpene synthase astC (754 aa).

An N-terminal signal peptide occupies residues 1–24; sequence MASLEVFVLYLRIFFISFMSRARS. The segment at 58–388 is sesterterpene synthase; sequence IQYRHSKLVD…RYHFHKPEHW (331 aa). The Mg(2+) site is built by D149 and D153. Positions 389-753 are geranylfarnesyl diphosphate synthase; sequence RQVENVDDDG…LRLLLKRLHV (365 aa). Basic and acidic residues predominate over residues 392–403; it reads ENVDDDGNKSDD. The interval 392–414 is disordered; it reads ENVDDDGNKSDDSGIAMKDSPES. Residues D512 and D516 each coordinate Mg(2+).

This sequence in the N-terminal section; belongs to the terpene synthase family. It in the C-terminal section; belongs to the FPP/GGPP synthase family. It depends on Mg(2+) as a cofactor.

The catalysed reaction is (2E,6E,10E,14E)-geranylfarnesyl diphosphate = preasperterpenoid A + diphosphate. It functions in the pathway secondary metabolite biosynthesis; terpenoid biosynthesis. In terms of biological role, bifunctional sesterterpene synthase; part of the gene cluster that mediates the biosynthesis of the asperterpenoids, sesterterpenes that exhibit anti-tuberculosis activity. The first step of the pathway is performed by the sesterterpene synthase astC that possesses both prenyl transferase and terpene cyclase activity, converting isopentenyl diphosphate and dimethylallyl diphosphate into geranylfarnesyl diphosphate (GFPP) and further converting GFPP into preasperterpenoid A, respectively. The cytochrome P450 monooxygenase astB then dually oxidizes preasperterpenoid A to produce asperterpenoid A along with a minor product, asperterpenoid B. Finally, the cytochrome P450 monooxygenase astA converts asperterpenoid A into asperterpenoid C. The polypeptide is Bifunctional sesterterpene synthase astC (Talaromyces wortmannii (Penicillium wortmannii)).